We begin with the raw amino-acid sequence, 126 residues long: Holo-[acyl-carrier-protein] synthase (126 aa).

Mg(2+) contacts are provided by Asp-9 and Glu-59.

It belongs to the P-Pant transferase superfamily. AcpS family. Mg(2+) is required as a cofactor.

Its subcellular location is the cytoplasm. It carries out the reaction apo-[ACP] + CoA = holo-[ACP] + adenosine 3',5'-bisphosphate + H(+). In terms of biological role, transfers the 4'-phosphopantetheine moiety from coenzyme A to a Ser of acyl-carrier-protein. This is Holo-[acyl-carrier-protein] synthase from Myxococcus xanthus (strain DK1622).